A 295-amino-acid chain; its full sequence is Myosin light chain kinase A (295 aa).

A Protein kinase domain is found at 8–265; that stretch reads YEFKEELGRG…ATNALNHPWL (258 aa). Residues 14–22 and Lys-37 each bind ATP; that span reads LGRGAFSIV. Residue Asp-130 is the Proton acceptor of the active site. Residues Thr-166 and Thr-289 each carry the phosphothreonine modification. An autoinhibitory domain region spans residues 264-295; that stretch reads WLKSNNSNNTIDTVKMKEYIVERQKTQTKLVN.

It belongs to the protein kinase superfamily. CAMK Ser/Thr protein kinase family. CaMK subfamily. Autophosphorylated. Transiently phosphorylated on Thr-166 and Thr-289. This phosphorylation is gbpC-dependent.

The catalysed reaction is L-seryl-[myosin light chain] + ATP = O-phospho-L-seryl-[myosin light chain] + ADP + H(+). It carries out the reaction L-threonyl-[myosin light chain] + ATP = O-phospho-L-threonyl-[myosin light chain] + ADP + H(+). Its activity is regulated as follows. Possesses an autoinhibitory domain. Autophosphorylation appears to increase the enzymatic activity. Activation is gbdC-dependent. Does not have a calmodulin-binding domain. Phosphorylates a specific serine in the N-terminus of a myosin light chain. Phosphorylates regulatory myosin light chain (mlcR) during chemotaxis. mlcR phosphorylation increases the motility and actin-activated ATPase activity of myosin, contributing to chemotaxis. The protein is Myosin light chain kinase A (mlkA) of Dictyostelium discoideum (Social amoeba).